The following is a 386-amino-acid chain: MSKTIIKNIGKIVSGDIKSPVLQADTIVVEDGLIAAIGGEELMKDAGDATIIDAAGSTVTPGLLDTHVHVSGGDYAPRQKTMDFISSALHGGVTTMISAGSPHFPGRPKDAAGTKALAITLSKSYYNARPAGVKVHGGAVILEKGLTEEDFIEMKKEGVWIVGEVGLGTIKNPEDAAPMVEWAHKHGFKVQMHTGGTSIPGSSTVTADDVIKTKPDVVSHINGGPTAISVQEVDRIMDETDFAMEIVQCGNPKIADYVARRAAEKGQLGRVIFGNDAPSGTGLIPLGILRNMCQIASMSDIDPEVAVCMATGNSTAVYGLNTGVIAPGKEADLIIMDTPLGSVAEDAMGAIAAGDIPGISVVLIDGEAVVTKSRNTPPAKRAAKIL.

The Zn(2+) site is built by H67, H69, and E164. The Fe cation site is built by E164, H193, and H220. D276 lines the Zn(2+) pocket.

Homotetramer. Dimer of dimers. The cofactor is Fe cation. Requires Zn(2+) as cofactor.

It catalyses the reaction 1,4,5,6-tetrahydro-6-oxonicotinate + 2 H2O = 2-formylglutarate + NH4(+). The protein operates within cofactor degradation; nicotinate degradation; propanoate and pyruvate from 6-hydroxynicotinate: step 2/8. In terms of biological role, decyclization of 6-oxo-1,4,5,6-tetrahydronicotinate to form 2-(enamine)glutarate, followed by hydrolysis to form (S)-2-formylglutarate. In Eubacterium barkeri (Clostridium barkeri), this protein is Enamidase.